The sequence spans 299 residues: ATP phosphoribosyltransferase (299 aa).

The protein belongs to the ATP phosphoribosyltransferase family. Long subfamily. As to quaternary structure, equilibrium between an active dimeric form, an inactive hexameric form and higher aggregates. Interconversion between the various forms is largely reversible and is influenced by the natural substrates and inhibitors of the enzyme. The cofactor is Mg(2+).

The protein resides in the cytoplasm. The catalysed reaction is 1-(5-phospho-beta-D-ribosyl)-ATP + diphosphate = 5-phospho-alpha-D-ribose 1-diphosphate + ATP. It functions in the pathway amino-acid biosynthesis; L-histidine biosynthesis; L-histidine from 5-phospho-alpha-D-ribose 1-diphosphate: step 1/9. Feedback inhibited by histidine. In terms of biological role, catalyzes the condensation of ATP and 5-phosphoribose 1-diphosphate to form N'-(5'-phosphoribosyl)-ATP (PR-ATP). Has a crucial role in the pathway because the rate of histidine biosynthesis seems to be controlled primarily by regulation of HisG enzymatic activity. This Salmonella agona (strain SL483) protein is ATP phosphoribosyltransferase.